The following is a 333-amino-acid chain: PDZ domain-containing protein GIPC1 (333 aa).

Residues 1–11 (MPLGLGRRKKA) are compositionally biased toward basic residues. Residues 1–53 (MPLGLGRRKKAPPLVENEEAEPSRSGLGVGEPGPLGGSAAGESQMGLPPPPAA) form a disordered region. Over residues 27-39 (LGVGEPGPLGGSA) the composition is skewed to gly residues. Ser-68 bears the Phosphoserine mark. The PDZ domain maps to 133-213 (EVEVFKSEEA…GRTFTLKLTE (81 aa)). Phosphoserine is present on residues Ser-222, Ser-225, and Ser-232. Positions 223 to 244 (QRSAGGHPGSGPQLGTGRGTLR) are disordered. Gly residues predominate over residues 228 to 240 (GHPGSGPQLGTGR). Position 242 is a phosphothreonine (Thr-242). Position 247 is a phosphoserine (Ser-247).

This sequence belongs to the GIPC family. As to quaternary structure, interacts with GLUT1 (C-terminus), ACTN1, KIF1B, MYO6 and PLEKHG5. Interacts with RGS19 C-terminus. Interacts with SDC4/syndecan-4 and SEMA4C/semaphorin-4C. Widely expressed.

It is found in the cytoplasm. Its subcellular location is the membrane. In terms of biological role, inhibits endothelial cell migration (in vitro). May be involved in G protein-linked signaling. The sequence is that of PDZ domain-containing protein GIPC1 (Gipc1) from Mus musculus (Mouse).